The following is a 147-amino-acid chain: MVEWTDKERTIISDIFSHMDYDDIGPKALSRCLIVYPWTQRHFSGFGNLYNAEAIIGNANVAAHGIKVLHGLDRGMKNMDNIADAYTDLSTLHSEKLHVDPDNFKLLSDCITIVLAAKMGHAFTAETQGAFQKFLAAVVSALGKQYH.

Residues 3–147 (EWTDKERTII…VVSALGKQYH (145 aa)) enclose the Globin domain. Residues His64 and His93 each coordinate heme b.

The protein belongs to the globin family. In terms of assembly, heterotetramer of two alpha chains and two beta chains. In terms of tissue distribution, red blood cells.

In terms of biological role, involved in oxygen transport from gills to the various peripheral tissues. In Trematomus newnesi (Dusky notothen), this protein is Hemoglobin subunit beta.